The primary structure comprises 244 residues: Ribonuclease HII (244 aa).

The region spanning 31–222 (RLIAGVDEAG…VRLALQGREG (192 aa)) is the RNase H type-2 domain. A divalent metal cation-binding residues include D37, E38, and D130.

This sequence belongs to the RNase HII family. Mn(2+) is required as a cofactor. The cofactor is Mg(2+).

Its subcellular location is the cytoplasm. The enzyme catalyses Endonucleolytic cleavage to 5'-phosphomonoester.. Its function is as follows. Endonuclease that specifically degrades the RNA of RNA-DNA hybrids. This is Ribonuclease HII from Xanthomonas axonopodis pv. citri (strain 306).